The following is a 109-amino-acid chain: Ferredoxin CarAc (109 aa).

Residues 3 to 108 (AKVRVIFRAA…GLTLELPKAQ (106 aa)) form the 2Fe-2S ferredoxin-type domain. Residues cysteine 43, cysteine 49, cysteine 52, and cysteine 89 each coordinate [2Fe-2S] cluster.

Belongs to the adrenodoxin/putidaredoxin family. As to quaternary structure, monomer. Carbazole 1,9a-dioxygenase complex consists of a terminal oxygenase component CarAa, a ferredoxin reductase component fdr and a ferredoxin component CarAc. It depends on [2Fe-2S] cluster as a cofactor.

In terms of biological role, part of the multicomponent carbazole 1,9a-dioxygenase (CARDO), that converts carbazole (CAR) into 2-aminobiphenyl-2,3-diol. Acts as a mediator in the electron transfer from fdr to CarAa. This Sphingomonas sp protein is Ferredoxin CarAc (carAc).